Here is a 289-residue protein sequence, read N- to C-terminus: ATP synthase gamma chain (289 aa).

Belongs to the ATPase gamma chain family. In terms of assembly, F-type ATPases have 2 components, CF(1) - the catalytic core - and CF(0) - the membrane proton channel. CF(1) has five subunits: alpha(3), beta(3), gamma(1), delta(1), epsilon(1). CF(0) has three main subunits: a, b and c.

The protein localises to the cell membrane. Produces ATP from ADP in the presence of a proton gradient across the membrane. The gamma chain is believed to be important in regulating ATPase activity and the flow of protons through the CF(0) complex. The chain is ATP synthase gamma chain from Buchnera aphidicola subsp. Melaphis rhois.